A 286-amino-acid chain; its full sequence is Light-independent protochlorophyllide reductase iron-sulfur ATP-binding protein (286 aa).

ATP-binding positions include 10–15 (GIGKST) and Lys-39. Ser-14 lines the Mg(2+) pocket. [4Fe-4S] cluster contacts are provided by Cys-95 and Cys-129. 180 to 181 (NR) serves as a coordination point for ATP.

The protein belongs to the NifH/BchL/ChlL family. As to quaternary structure, homodimer. Protochlorophyllide reductase is composed of three subunits; ChlL, ChlN and ChlB. Requires [4Fe-4S] cluster as cofactor.

It catalyses the reaction chlorophyllide a + oxidized 2[4Fe-4S]-[ferredoxin] + 2 ADP + 2 phosphate = protochlorophyllide a + reduced 2[4Fe-4S]-[ferredoxin] + 2 ATP + 2 H2O. It functions in the pathway porphyrin-containing compound metabolism; chlorophyll biosynthesis (light-independent). Its function is as follows. Component of the dark-operative protochlorophyllide reductase (DPOR) that uses Mg-ATP and reduced ferredoxin to reduce ring D of protochlorophyllide (Pchlide) to form chlorophyllide a (Chlide). This reaction is light-independent. The L component serves as a unique electron donor to the NB-component of the complex, and binds Mg-ATP. The protein is Light-independent protochlorophyllide reductase iron-sulfur ATP-binding protein of Cyanothece sp. (strain PCC 7425 / ATCC 29141).